The following is a 158-amino-acid chain: Transcription elongation factor GreA (158 aa).

Residues 48–75 (NSEYDSAKEDQAFVEGRIAQLEKMIRNA) are a coiled coil.

Belongs to the GreA/GreB family.

Functionally, necessary for efficient RNA polymerase transcription elongation past template-encoded arresting sites. The arresting sites in DNA have the property of trapping a certain fraction of elongating RNA polymerases that pass through, resulting in locked ternary complexes. Cleavage of the nascent transcript by cleavage factors such as GreA or GreB allows the resumption of elongation from the new 3'terminus. GreA releases sequences of 2 to 3 nucleotides. The polypeptide is Transcription elongation factor GreA (Shouchella clausii (strain KSM-K16) (Alkalihalobacillus clausii)).